We begin with the raw amino-acid sequence, 93 residues long: Guanine nucleotide-binding protein subunit gamma (93 aa).

Positions 1-22 (MPQYASRDVGDPSQIKKNKQSM) are disordered. The S-palmitoyl cysteine moiety is linked to residue Cys-89. Cysteine methyl ester is present on Cys-90. Residue Cys-90 is the site of S-farnesyl cysteine attachment. Positions 91-93 (VVM) are cleaved as a propeptide — removed in mature form.

The protein belongs to the G protein gamma family. G proteins are composed of 3 units, alpha, beta and gamma.

The protein localises to the membrane. The chain is Guanine nucleotide-binding protein subunit gamma (gng-1) from Neurospora crassa (strain ATCC 24698 / 74-OR23-1A / CBS 708.71 / DSM 1257 / FGSC 987).